The primary structure comprises 255 residues: MNLIPAIDLMNGKCVRLFKGDFNKRKDFTKEPHEQAKFWESEGAKCIHIVDLDAAKTGSPTNDKSIKKIAKTVNIPIQIGGGIRSQERIEQLFSYGIEKVIMGTSAIENKELVKDLSNKYPGRIIVGIDAKNGKVSTRGWLEQSNIFATDLVKEFSSFKIASFIVTDINTDGTLEGTNEEFIKSILEITDIPVIASGGVGSISDLLSLVKFENSGLFGVIVGKALYENKFTIKEANNVLSSERLNDFDLNRNYYA.

The Proton acceptor role is filled by D8. Residue D129 is the Proton donor of the active site.

This sequence belongs to the HisA/HisF family.

Its subcellular location is the cytoplasm. The enzyme catalyses 1-(5-phospho-beta-D-ribosyl)-5-[(5-phospho-beta-D-ribosylamino)methylideneamino]imidazole-4-carboxamide = 5-[(5-phospho-1-deoxy-D-ribulos-1-ylimino)methylamino]-1-(5-phospho-beta-D-ribosyl)imidazole-4-carboxamide. It participates in amino-acid biosynthesis; L-histidine biosynthesis; L-histidine from 5-phospho-alpha-D-ribose 1-diphosphate: step 4/9. This chain is 1-(5-phosphoribosyl)-5-[(5-phosphoribosylamino)methylideneamino] imidazole-4-carboxamide isomerase, found in Prochlorococcus marinus (strain MIT 9301).